Reading from the N-terminus, the 1563-residue chain is Pentafunctional AROM polypeptide (1563 aa).

The tract at residues 1–382 (MAEPISNPTR…YEPKASVVED (382 aa)) is 3-dehydroquinate synthase. Residues 48-50 (DTN), 82-85 (EYSK), 113-115 (GGV), and aspartate 118 each bind NAD(+). Arginine 129 is a 7-phospho-2-dehydro-3-deoxy-D-arabino-heptonate binding site. Position 138–139 (138–139 (TT)) interacts with NAD(+). Residues aspartate 145 and lysine 151 each contribute to the 7-phospho-2-dehydro-3-deoxy-D-arabino-heptonate site. Lysine 160 provides a ligand contact to NAD(+). Asparagine 161 contributes to the 7-phospho-2-dehydro-3-deoxy-D-arabino-heptonate binding site. Residues 178 to 181 (FLNT) and asparagine 189 each bind NAD(+). Glutamate 193 is a binding site for Zn(2+). Residues 193 to 196 (EVIK) and lysine 248 each bind 7-phospho-2-dehydro-3-deoxy-D-arabino-heptonate. Glutamate 258 functions as the Proton acceptor; for 3-dehydroquinate synthase activity in the catalytic mechanism. 7-phospho-2-dehydro-3-deoxy-D-arabino-heptonate-binding positions include 262-266 (RNLLN) and histidine 269. Histidine 269 is a Zn(2+) binding site. The active-site Proton acceptor; for 3-dehydroquinate synthase activity is histidine 273. 7-phospho-2-dehydro-3-deoxy-D-arabino-heptonate contacts are provided by histidine 285 and lysine 354. Histidine 285 provides a ligand contact to Zn(2+). Residues 395–834 (VFAGVPKDLN…WDTMSNYFKV (440 aa)) are EPSP synthase. Residue cysteine 816 is the For EPSP synthase activity of the active site. Residues 857-1051 (PKSIFIIGMR…KKKPHSFFVS (195 aa)) form a shikimate kinase region. ATP is bound at residue 864 to 871 (GMRGAGKS). The 3-dehydroquinase stretch occupies residues 1052–1265 (LTVPNVSKAL…AAPGQLSAAE (214 aa)). The Proton acceptor; for 3-dehydroquinate dehydratase activity role is filled by histidine 1168. The active-site Schiff-base intermediate with substrate; for 3-dehydroquinate dehydratase activity is lysine 1196. The tract at residues 1278–1563 (PRSFHLFGNP…TDAQAAVMGN (286 aa)) is shikimate dehydrogenase.

It in the N-terminal section; belongs to the sugar phosphate cyclases superfamily. Dehydroquinate synthase family. In the 2nd section; belongs to the EPSP synthase family. The protein in the 3rd section; belongs to the shikimate kinase family. This sequence in the 4th section; belongs to the type-I 3-dehydroquinase family. It in the C-terminal section; belongs to the shikimate dehydrogenase family. Homodimer. Zn(2+) is required as a cofactor.

It localises to the cytoplasm. It carries out the reaction 7-phospho-2-dehydro-3-deoxy-D-arabino-heptonate = 3-dehydroquinate + phosphate. The enzyme catalyses 3-dehydroquinate = 3-dehydroshikimate + H2O. The catalysed reaction is shikimate + NADP(+) = 3-dehydroshikimate + NADPH + H(+). It catalyses the reaction shikimate + ATP = 3-phosphoshikimate + ADP + H(+). It carries out the reaction 3-phosphoshikimate + phosphoenolpyruvate = 5-O-(1-carboxyvinyl)-3-phosphoshikimate + phosphate. It participates in metabolic intermediate biosynthesis; chorismate biosynthesis; chorismate from D-erythrose 4-phosphate and phosphoenolpyruvate: step 2/7. It functions in the pathway metabolic intermediate biosynthesis; chorismate biosynthesis; chorismate from D-erythrose 4-phosphate and phosphoenolpyruvate: step 3/7. Its pathway is metabolic intermediate biosynthesis; chorismate biosynthesis; chorismate from D-erythrose 4-phosphate and phosphoenolpyruvate: step 4/7. The protein operates within metabolic intermediate biosynthesis; chorismate biosynthesis; chorismate from D-erythrose 4-phosphate and phosphoenolpyruvate: step 5/7. It participates in metabolic intermediate biosynthesis; chorismate biosynthesis; chorismate from D-erythrose 4-phosphate and phosphoenolpyruvate: step 6/7. Its function is as follows. The AROM polypeptide catalyzes 5 consecutive enzymatic reactions in prechorismate polyaromatic amino acid biosynthesis. This chain is Pentafunctional AROM polypeptide, found in Neurospora crassa (strain ATCC 24698 / 74-OR23-1A / CBS 708.71 / DSM 1257 / FGSC 987).